The primary structure comprises 674 residues: Kinesin-like protein KIFC1 (674 aa).

A phosphoserine mark is found at Ser-28, Ser-33, and Ser-35. Residues 66 to 96 (TSRPRGPLLSTVSQTQGHTAAQKGPKKTGPR) are disordered. The span at 75 to 84 (STVSQTQGHT) shows a compositional bias: polar residues. Positions 146–315 (DLNEELKRYR…QELKGNIRVF (170 aa)) form a coiled coil. One can recognise a Kinesin motor domain in the interval 311 to 664 (NIRVFCRVRP…LRFASKVNQC (354 aa)). The interval 327–366 (TPSPGFLVFPPGPAGPSDPPTGLSLSRSDDRRSTLTGAPA) is disordered. The span at 336–345 (PPGPAGPSDP) shows a compositional bias: pro residues. At Thr-360 the chain carries Phosphothreonine. An ATP-binding site is contributed by 411-418 (GQTGSGKT).

It belongs to the TRAFAC class myosin-kinesin ATPase superfamily. Kinesin family. NCD subfamily. In terms of assembly, binds NUBP1 and NUBP2. Interacts with PPP1R42. Highly expressed in 14 dpc embryos, spleen and NIH3T3 cells. Also expressed in testis, brain, lung, kidney and cultured astrocytes. Very low levels in skeletal muscle and heart.

It localises to the nucleus. It is found in the cytoplasm. Its subcellular location is the cytoskeleton. The protein resides in the microtubule organizing center. The protein localises to the centrosome. It localises to the spindle. It is found in the early endosome. Minus end-directed microtubule-dependent motor required for bipolar spindle formation. May contribute to movement of early endocytic vesicles. Regulates cilium formation and structure. This Mus musculus (Mouse) protein is Kinesin-like protein KIFC1.